We begin with the raw amino-acid sequence, 886 residues long: Alanine--tRNA ligase (886 aa).

Zn(2+) contacts are provided by His-564, His-568, Cys-666, and His-670.

This sequence belongs to the class-II aminoacyl-tRNA synthetase family. Requires Zn(2+) as cofactor.

Its subcellular location is the cytoplasm. The catalysed reaction is tRNA(Ala) + L-alanine + ATP = L-alanyl-tRNA(Ala) + AMP + diphosphate. In terms of biological role, catalyzes the attachment of alanine to tRNA(Ala) in a two-step reaction: alanine is first activated by ATP to form Ala-AMP and then transferred to the acceptor end of tRNA(Ala). Also edits incorrectly charged Ser-tRNA(Ala) and Gly-tRNA(Ala) via its editing domain. The polypeptide is Alanine--tRNA ligase (Prochlorococcus marinus (strain MIT 9301)).